The chain runs to 92 residues: Acylphosphatase (92 aa).

The region spanning 6 to 92 is the Acylphosphatase-like domain; the sequence is RAHVYVSGRV…EGVDGFEIRR (87 aa). Catalysis depends on residues Arg-21 and Asn-39.

This sequence belongs to the acylphosphatase family.

The enzyme catalyses an acyl phosphate + H2O = a carboxylate + phosphate + H(+). This chain is Acylphosphatase (acyP), found in Natronomonas pharaonis (strain ATCC 35678 / DSM 2160 / CIP 103997 / JCM 8858 / NBRC 14720 / NCIMB 2260 / Gabara) (Halobacterium pharaonis).